Consider the following 587-residue polypeptide: Polyadenylate-binding protein-interacting protein 3 (587 aa).

In terms of domain architecture, Sm spans 51–132 (LLVYFTTCNI…LVQVIAKDLP (82 aa)). Residues 422-503 (AKSENSSGWP…QSPQSPVFDG (82 aa)) are disordered. The segment covering 431 to 464 (PGSSISRNSENSAASSASNLPILSPSSSGSLSSE) has biased composition (low complexity). A PAM2-like 1; degenerate motif is present at residues 467–475 (TLNPNAKEF). Residues 476–486 (KLNPNAKSFKP) carry the PAM2-like 2 motif. Polar residues predominate over residues 486 to 498 (PSPSATRPQSPQS).

The protein is Polyadenylate-binding protein-interacting protein 3 (CID3) of Arabidopsis thaliana (Mouse-ear cress).